We begin with the raw amino-acid sequence, 384 residues long: Ribosomal RNA small subunit methyltransferase H (384 aa).

Residues 99 to 101, Asp118, Tyr145, Asp169, and Gln176 each bind S-adenosyl-L-methionine; that span reads GGH.

The protein belongs to the methyltransferase superfamily. RsmH family.

It localises to the cytoplasm. It carries out the reaction cytidine(1402) in 16S rRNA + S-adenosyl-L-methionine = N(4)-methylcytidine(1402) in 16S rRNA + S-adenosyl-L-homocysteine + H(+). In terms of biological role, specifically methylates the N4 position of cytidine in position 1402 (C1402) of 16S rRNA. The chain is Ribosomal RNA small subunit methyltransferase H from Mycobacteroides abscessus (strain ATCC 19977 / DSM 44196 / CCUG 20993 / CIP 104536 / JCM 13569 / NCTC 13031 / TMC 1543 / L948) (Mycobacterium abscessus).